We begin with the raw amino-acid sequence, 695 residues long: Serotransferrin (695 aa).

A signal peptide spans methionine 1–alanine 19. Transferrin-like domains lie at valine 25–glutamate 347 and valine 361–lysine 680. Disulfide bonds link cysteine 28–cysteine 67 and cysteine 38–cysteine 58. At arginine 42 the chain carries Dimethylated arginine. Fe(3+) contacts are provided by aspartate 82 and tyrosine 114. Intrachain disulfides connect cysteine 137–cysteine 213, cysteine 156–cysteine 350, cysteine 177–cysteine 193, cysteine 180–cysteine 196, cysteine 190–cysteine 198, cysteine 246–cysteine 260, cysteine 358–cysteine 612, cysteine 364–cysteine 396, cysteine 374–cysteine 387, cysteine 421–cysteine 690, cysteine 436–cysteine 653, cysteine 468–cysteine 539, cysteine 492–cysteine 681, cysteine 502–cysteine 516, cysteine 513–cysteine 522, cysteine 579–cysteine 593, and cysteine 631–cysteine 636. The hydrogencarbonate site is built by threonine 139, arginine 143, alanine 145, and glycine 146. Tyrosine 207 provides a ligand contact to Fe(3+). Histidine 268 serves as a coordination point for Fe(3+). A Phosphoserine modification is found at serine 389. Fe(3+) is bound by residues aspartate 411 and tyrosine 444. Threonine 470, arginine 474, alanine 476, and glycine 477 together coordinate hydrogencarbonate. A glycan (N-linked (GlcNAc...) asparagine) is linked at asparagine 509. Residue tyrosine 533 coordinates Fe(3+). Histidine 601 lines the Fe(3+) pocket. The residue at position 682 (serine 682) is a Phosphoserine.

This sequence belongs to the transferrin family. As to quaternary structure, monomer. Part of a complex composed of SLC40A1/ferroportin, TF/transferrin and HEPH/hephaestin that transfers iron from cells to transferrin. As to expression, expressed by the liver and secreted in plasma.

Its subcellular location is the secreted. Transferrins are iron binding transport proteins which can bind two Fe(3+) ions in association with the binding of an anion, usually bicarbonate. It is responsible for the transport of iron from sites of absorption and heme degradation to those of storage and utilization. Serum transferrin may also have a further role in stimulating cell proliferation. The protein is Serotransferrin (TF) of Oryctolagus cuniculus (Rabbit).